Consider the following 492-residue polypeptide: N-succinylglutamate 5-semialdehyde dehydrogenase (492 aa).

220-225 (GSANTG) serves as a coordination point for NAD(+). Residues Glu243 and Cys277 contribute to the active site.

The protein belongs to the aldehyde dehydrogenase family. AstD subfamily.

It carries out the reaction N-succinyl-L-glutamate 5-semialdehyde + NAD(+) + H2O = N-succinyl-L-glutamate + NADH + 2 H(+). It functions in the pathway amino-acid degradation; L-arginine degradation via AST pathway; L-glutamate and succinate from L-arginine: step 4/5. Functionally, catalyzes the NAD-dependent reduction of succinylglutamate semialdehyde into succinylglutamate. This chain is N-succinylglutamate 5-semialdehyde dehydrogenase, found in Escherichia coli O9:H4 (strain HS).